The chain runs to 67 residues: Photosystem II reaction center protein H (67 aa).

Residues 27 to 47 traverse the membrane as a helical segment; sequence GAVPVMAFIGVLLLVFLVILL.

The protein belongs to the PsbH family. As to quaternary structure, PSII is composed of 1 copy each of membrane proteins PsbA, PsbB, PsbC, PsbD, PsbE, PsbF, PsbH, PsbI, PsbJ, PsbK, PsbL, PsbM, PsbT, PsbX, PsbY, Psb30/Ycf12, peripheral proteins PsbO, CyanoQ (PsbQ), PsbU, PsbV and a large number of cofactors. It forms dimeric complexes.

Its subcellular location is the cellular thylakoid membrane. One of the components of the core complex of photosystem II (PSII), required for its stability and/or assembly. PSII is a light-driven water:plastoquinone oxidoreductase that uses light energy to abstract electrons from H(2)O, generating O(2) and a proton gradient subsequently used for ATP formation. It consists of a core antenna complex that captures photons, and an electron transfer chain that converts photonic excitation into a charge separation. This Prochlorococcus marinus (strain MIT 9211) protein is Photosystem II reaction center protein H.